The sequence spans 27 residues: MKIFLYLLRKKIAEVWIFQNPANFLSL.

Its subcellular location is the plastid. The protein localises to the chloroplast. This is an uncharacterized protein from Trieres chinensis (Marine centric diatom).